The primary structure comprises 251 residues: 3-deoxy-manno-octulosonate cytidylyltransferase (251 aa).

The protein belongs to the KdsB family.

Its subcellular location is the cytoplasm. The enzyme catalyses 3-deoxy-alpha-D-manno-oct-2-ulosonate + CTP = CMP-3-deoxy-beta-D-manno-octulosonate + diphosphate. It functions in the pathway nucleotide-sugar biosynthesis; CMP-3-deoxy-D-manno-octulosonate biosynthesis; CMP-3-deoxy-D-manno-octulosonate from 3-deoxy-D-manno-octulosonate and CTP: step 1/1. The protein operates within bacterial outer membrane biogenesis; lipopolysaccharide biosynthesis. Its function is as follows. Activates KDO (a required 8-carbon sugar) for incorporation into bacterial lipopolysaccharide in Gram-negative bacteria. In Sodalis glossinidius (strain morsitans), this protein is 3-deoxy-manno-octulosonate cytidylyltransferase.